The chain runs to 296 residues: Enoyl-CoA hydratase domain-containing protein 2, mitochondrial (296 aa).

The N-terminal 17 residues, 1 to 17, are a transit peptide targeting the mitochondrion; sequence MLRVLPRALRLPCSWRF. Lys-101 carries the post-translational modification N6-acetyllysine; alternate. Lys-101 is subject to N6-succinyllysine; alternate.

Belongs to the enoyl-CoA hydratase/isomerase family.

The protein resides in the mitochondrion. The sequence is that of Enoyl-CoA hydratase domain-containing protein 2, mitochondrial (Echdc2) from Mus musculus (Mouse).